We begin with the raw amino-acid sequence, 140 residues long: Endoribonuclease YbeY (140 aa).

Zn(2+) contacts are provided by His101, His105, and His111.

This sequence belongs to the endoribonuclease YbeY family. It depends on Zn(2+) as a cofactor.

It localises to the cytoplasm. Single strand-specific metallo-endoribonuclease involved in late-stage 70S ribosome quality control and in maturation of the 3' terminus of the 16S rRNA. In Aliarcobacter butzleri (strain RM4018) (Arcobacter butzleri), this protein is Endoribonuclease YbeY.